The chain runs to 794 residues: MMQTKVQNKKRQVAFFILLMLWGEVGSESIQYSVLEETESGTFVANLTKDLGLRVGELASRGARVVFKGNRQHLQFDPQTHDLLLNEKLDREELCGSTEPCVLPFQVLLENPLQFFQASLRVRDINDHAPEFPAREMLLKISEITMPGKIFPLKMAHDLDTGSNGLQRYTISSNPHFHVLTRNRSEGRKFPELVLDKPLDREEQPQLRLTLIALDGGSPPRSGTSEIQIQVLDINDNVPEFAQELYEAQVPENNPLGSLVITVSARDLDAGSFGKVSYALFQVDDVNQPFEINAITGEIRLRKALDFEEIQSYDVDVEATDGGGLSGKCSLVVRVLDVNDNAPELTMSFFISLIPENLPEITVAVFSVSDADSGHNQQVICSIENNLPFLLRPSVENFYTLVTEGALDRESRAEYNITITVTDLGTPRLKTQQSITVQVSDVNDNAPAFTQTSYTLFVRENNSPALHIGSVSATDRDSGINAQVTYSLLPPQDPHLPLSSLVSINADNGHLFALRSLDYEALQSFEFRVGATDRGSPALSSEALVRLLVLDANDNSPFVLYPLQNGSAPCTELVPRAAEPGYLVTKVVAVDGDSGQNAWLSYQLLKATELGLFGVWAHNGEVRTARLLSERDAAKHRLVVLVKDNGEPPRSATATLHVLLVDGFSQPYLPLPEAAPAQAQADSLTVYLVVALASVSSLFLFSVLLFVAVRLCRRSRAASVGRYSVPEGPFPGHLVDVSGTGTLSQSYQYKVCLTGGSETNEFKFLKPIMPNFPPQGTEREMEETPTSRNSFPFS.

The N-terminal stretch at 1–27 (MMQTKVQNKKRQVAFFILLMLWGEVGS) is a signal peptide. Over 28 to 688 (ESIQYSVLEE…AQADSLTVYL (661 aa)) the chain is Extracellular. Cadherin domains are found at residues 34–132 (VLEE…APEF), 137–241 (MLLK…VPEF), 246–345 (YEAQ…APEL), 350–449 (FISL…APAF), and 454–559 (YTLF…SPFV). Residue N46 is glycosylated (N-linked (GlcNAc...) asparagine). C95 and C101 are joined by a disulfide. N183 carries an N-linked (GlcNAc...) asparagine glycan. A glycan (N-linked (GlcNAc...) asparagine) is linked at N416. N-linked (GlcNAc...) asparagine glycosylation occurs at N565. Positions 566-669 (GSAPCTELVP…LVDGFSQPYL (104 aa)) constitute a Cadherin 6 domain. A helical transmembrane segment spans residues 689 to 709 (VVALASVSSLFLFSVLLFVAV). Residues 710–794 (RLCRRSRAAS…PTSRNSFPFS (85 aa)) are Cytoplasmic-facing. A disordered region spans residues 773–794 (PPQGTEREMEETPTSRNSFPFS). Residues 784–794 (TPTSRNSFPFS) are compositionally biased toward polar residues.

As to quaternary structure, forms homodimers in trans (molecules expressed by two different cells). Forms promiscuous heterodimers in cis (at the plasma membrane of the same cell) with other protocadherins.

It is found in the cell membrane. Its function is as follows. Calcium-dependent cell-adhesion protein involved in cells self-recognition and non-self discrimination. Thereby, it is involved in the establishment and maintenance of specific neuronal connections in the brain. The chain is Protocadherin beta-6 from Homo sapiens (Human).